Here is a 425-residue protein sequence, read N- to C-terminus: UDP-N-acetylglucosamine 1-carboxyvinyltransferase (425 aa).

A phosphoenolpyruvate-binding site is contributed by 22–23 (KN). Position 98 (Arg98) interacts with UDP-N-acetyl-alpha-D-glucosamine. The active-site Proton donor is the Cys122. The residue at position 122 (Cys122) is a 2-(S-cysteinyl)pyruvic acid O-phosphothioketal. Residues 127–131 (RPVDQ), Asp313, and Ile335 each bind UDP-N-acetyl-alpha-D-glucosamine.

It belongs to the EPSP synthase family. MurA subfamily.

It localises to the cytoplasm. The catalysed reaction is phosphoenolpyruvate + UDP-N-acetyl-alpha-D-glucosamine = UDP-N-acetyl-3-O-(1-carboxyvinyl)-alpha-D-glucosamine + phosphate. It functions in the pathway cell wall biogenesis; peptidoglycan biosynthesis. Cell wall formation. Adds enolpyruvyl to UDP-N-acetylglucosamine. The protein is UDP-N-acetylglucosamine 1-carboxyvinyltransferase of Xylella fastidiosa (strain M12).